A 292-amino-acid polypeptide reads, in one-letter code: Protein PHR1-LIKE 3 (292 aa).

Residues 34-94 enclose the HTH myb-type domain; sequence TDPKPRLRWT…HLQKFRLGRQ (61 aa). Residues 65-90 constitute a DNA-binding region (H-T-H motif); that stretch reads PKTIMRTMGVKGLTLYHLKSHLQKFR. Positions 137-157 form a coiled coil; it reads TEALRAQMEVQRRLHEQLEVQ. The short motif at 150–155 is the LHEQLE element; that stretch reads LHEQLE.

This sequence belongs to the MYB-CC family. In terms of assembly, homo- and heterodimers. Interacts with PHL2, but not with PHR1.

Its subcellular location is the nucleus. In terms of biological role, transcriptional activator. Probable component of the central regulatory system controlling transcriptional responses to Pi starvation. Binds in a sequence-specific manner to phosphate starvation-regulated promoters. Required for female gametophyte development and function. The sequence is that of Protein PHR1-LIKE 3 from Arabidopsis thaliana (Mouse-ear cress).